Reading from the N-terminus, the 375-residue chain is Protein NDRG3 (375 aa).

Residues 326-375 (RSRTHSASSSGSMEIPRSRSHTSNAQLKSSSNNSLSNQIQETPQTIELSC) are disordered. Positions 348-363 (SNAQLKSSSNNSLSNQ) are enriched in low complexity. The span at 364–375 (IQETPQTIELSC) shows a compositional bias: polar residues.

This sequence belongs to the NDRG family.

The polypeptide is Protein NDRG3 (Xenopus laevis (African clawed frog)).